The sequence spans 363 residues: Adenylate cyclase 2 (363 aa).

The Guanylate cyclase domain maps to 157 to 286; the sequence is VFLFIDLAGS…DTVNTTARLE (130 aa). Positions 162 and 206 each coordinate Mg(2+). The tract at residues 341-363 is disordered; sequence GDGATEPAGETVRSPAAEAFTSL.

It belongs to the adenylyl cyclase class-3 family. Mg(2+) is required as a cofactor.

The enzyme catalyses ATP = 3',5'-cyclic AMP + diphosphate. Plays essential roles in regulation of cellular metabolism by catalyzing the synthesis of a second messenger, cAMP. The chain is Adenylate cyclase 2 (cya2) from Rhizobium meliloti (strain 1021) (Ensifer meliloti).